The sequence spans 301 residues: MSVRSAEYPRPKHFLVHLSDTHLVAQGELYDAVDASTRLREVLSGIVASGARPDALIFTGDLTDQGHPDAYAELKAIVEPVAAEIDAQVIWAMGNHDDRSTFRSLLLGEDATDHPVDNVYDLDGLRVITLDSSVPGHHYGEISDRQLDWLRSELAVPAPDGTILALHHPPVPCIQDLAVLVELRDQSRLADVLRGSDVRAILAGHLHYSTTATFAGIPVSVASSTCYTQDLNVEVGGQRGRDGAQGCNLVHVYDETIVHSVVPLGAHVTVGEPVDADEGARRLSAAGIRILESEKAGRSIV.

Fe cation-binding residues include Asp-20, His-22, Asp-61, Asn-95, His-167, His-205, and His-207. Residues His-22, Asp-61, and 95–96 (NH) each bind AMP. His-207 is an AMP binding site.

The protein belongs to the cyclic nucleotide phosphodiesterase class-III family. The cofactor is Fe(2+).

This is Probable cyclic nucleotide phosphodiesterase RER_40650 from Rhodococcus erythropolis (strain PR4 / NBRC 100887).